The primary structure comprises 63 residues: Large ribosomal subunit protein uL29 (63 aa).

It belongs to the universal ribosomal protein uL29 family.

The protein is Large ribosomal subunit protein uL29 of Escherichia coli O8 (strain IAI1).